A 307-amino-acid polypeptide reads, in one-letter code: Mitochondrial glycine transporter (307 aa).

Solcar repeat units lie at residues 8–87 (PRNS…MRSS), 115–199 (LTMY…SKQL), and 221–305 (TSTT…LVKR). The next 6 membrane-spanning stretches (helical) occupy residues 14–39 (LIGG…TRIQ), 62–88 (GTLP…RSSL), 121–146 (LLTG…VRYE), 174–197 (GFGA…EKSK), 225–251 (VNTT…KTRM), and 280–298 (GLSM…AWGI).

This sequence belongs to the mitochondrial carrier (TC 2.A.29) family. SLC25A38 subfamily.

The protein localises to the mitochondrion. Its subcellular location is the mitochondrion inner membrane. It catalyses the reaction glycine(in) = glycine(out). Mitochondrial glycine transporter that imports glycine into the mitochondrial matrix. Plays an important role in providing glycine for the first enzymatic step in heme biosynthesis, the condensation of glycine with succinyl-CoA to produce 5-aminolevulinate (ALA) in the mitochondrial matrix. This is Mitochondrial glycine transporter from Saccharomyces cerevisiae (strain ATCC 204508 / S288c) (Baker's yeast).